The chain runs to 525 residues: 2,3-bisphosphoglycerate-independent phosphoglycerate mutase (525 aa).

Asp-15 and Ser-65 together coordinate Mn(2+). The Phosphoserine intermediate role is filled by Ser-65. Residues His-126, Arg-156–Asp-157, Arg-188, Arg-194, Arg-258–Arg-261, and Lys-331 each bind substrate. Positions 398, 402, 439, 440, and 457 each coordinate Mn(2+).

Belongs to the BPG-independent phosphoglycerate mutase family. In terms of assembly, monomer. Mn(2+) is required as a cofactor.

The catalysed reaction is (2R)-2-phosphoglycerate = (2R)-3-phosphoglycerate. It participates in carbohydrate degradation; glycolysis; pyruvate from D-glyceraldehyde 3-phosphate: step 3/5. Functionally, catalyzes the interconversion of 2-phosphoglycerate and 3-phosphoglycerate. This Picosynechococcus sp. (strain ATCC 27264 / PCC 7002 / PR-6) (Agmenellum quadruplicatum) protein is 2,3-bisphosphoglycerate-independent phosphoglycerate mutase.